Here is a 716-residue protein sequence, read N- to C-terminus: Putative cuticle collagen 99 (716 aa).

Disordered regions lie at residues 85–122 (LPSS…PVGP) and 183–472 (PPGP…SLVA). Triple-helical region stretches follow at residues 179-238 (GMPG…KGDR), 265-298 (LPGP…FDGE), and 302-330 (GPKG…EKGD). Positions 266–277 (PGPPGPPGPPGP) are enriched in pro residues. Basic and acidic residues predominate over residues 280–290 (RDGRHGLKGDR). A compositionally biased stretch (pro residues) spans 349–358 (PGPPGPPGPP). 2 triple-helical region regions span residues 385-411 (GPPG…AGAA) and 422-467 (GPPG…GRHG). The span at 389 to 401 (EKGERGERGEPGD) shows a compositional bias: basic and acidic residues. Over residues 402-422 (RGLPGAAGAANLLNGGKALVG) the composition is skewed to low complexity. Positions 429–444 (RDGRPGDKGEKGEQGL) are enriched in basic and acidic residues. A glycan (N-linked (GlcNAc...) asparagine) is linked at N474. Positions 503–716 (KNVIPGPPGP…GAETRPPVTD (214 aa)) are disordered. Triple-helical region regions lie at residues 507-557 (PGPP…QPGA), 566-603 (GPRG…PPGP), and 605-664 (GLRG…PGLD). Residues 568–577 (RGPPGLPGPP) are compositionally biased toward pro residues.

The protein belongs to the cuticular collagen family. As to quaternary structure, collagen polypeptide chains are complexed within the cuticle by disulfide bonds and other types of covalent cross-links.

Functionally, nematode cuticles are composed largely of collagen-like proteins. The cuticle functions both as an exoskeleton and as a barrier to protect the worm from its environment. This Caenorhabditis elegans protein is Putative cuticle collagen 99 (col-99).